The primary structure comprises 576 residues: Polypeptide N-acetylgalactosaminyltransferase 12 (576 aa).

Over methionine 1 to glutamate 19 the chain is Cytoplasmic. Residues alanine 20 to arginine 37 form a helical; Signal-anchor for type II membrane protein membrane-spanning segment. Residues serine 38–proline 58 are disordered. The Lumenal portion of the chain corresponds to serine 38–serine 576. 5 disulfide bridges follow: cysteine 120–cysteine 353, cysteine 344–cysteine 417, cysteine 453–cysteine 474, cysteine 501–cysteine 516, and cysteine 542–cysteine 561. The segment at leucine 130 to arginine 239 is catalytic subdomain A. Substrate-binding residues include aspartate 171 and arginine 200. Mn(2+) contacts are provided by aspartate 223 and histidine 225. The segment at valine 299–proline 361 is catalytic subdomain B. Position 330 (tryptophan 330) interacts with substrate. Residue histidine 358 coordinates Mn(2+). Substrate is bound at residue tyrosine 366. The 133-residue stretch at phenylalanine 440 to lysine 572 folds into the Ricin B-type lectin domain.

This sequence belongs to the glycosyltransferase 2 family. GalNAc-T subfamily. Requires Mn(2+) as cofactor.

The protein resides in the golgi apparatus membrane. The enzyme catalyses L-seryl-[protein] + UDP-N-acetyl-alpha-D-galactosamine = a 3-O-[N-acetyl-alpha-D-galactosaminyl]-L-seryl-[protein] + UDP + H(+). It carries out the reaction L-threonyl-[protein] + UDP-N-acetyl-alpha-D-galactosamine = a 3-O-[N-acetyl-alpha-D-galactosaminyl]-L-threonyl-[protein] + UDP + H(+). The protein operates within protein modification; protein glycosylation. Catalyzes the initial reaction in O-linked oligosaccharide biosynthesis, the transfer of an N-acetyl-D-galactosamine residue to a serine or threonine residue on the protein receptor. Has activity toward non-glycosylated peptides such as Muc5AC, Muc1a and EA2, and no detectable activity with Muc2 and Muc7. Displays enzymatic activity toward the Gal-NAc-Muc5AC glycopeptide, but no detectable activity to mono-GalNAc-glycosylated Muc1a, Muc2, Muc7 and EA2. May play an important role in the initial step of mucin-type oligosaccharide biosynthesis in digestive organs. The sequence is that of Polypeptide N-acetylgalactosaminyltransferase 12 (Galnt12) from Mus musculus (Mouse).